Here is a 213-residue protein sequence, read N- to C-terminus: Redox-sensing transcriptional repressor Rex (213 aa).

Positions 17 to 56 (LYYRIFKRFYADQVEKASSKQIADAMGIDSATVRRDFSYF) form a DNA-binding region, H-T-H motif. 91–96 (GCGNIG) lines the NAD(+) pocket.

It belongs to the transcriptional regulatory Rex family. In terms of assembly, homodimer.

It is found in the cytoplasm. Functionally, modulates transcription in response to changes in cellular NADH/NAD(+) redox state. The sequence is that of Redox-sensing transcriptional repressor Rex from Streptococcus uberis (strain ATCC BAA-854 / 0140J).